Reading from the N-terminus, the 431-residue chain is Lipoyl synthase 2, mitochondrial (431 aa).

Residues 21-43 form a disordered region; sequence SPLGKLQEERGEGVAKDPKKDKQ. The segment covering 26 to 40 has biased composition (basic and acidic residues); it reads LQEERGEGVAKDPKK. Residues C127, C132, C138, C159, C163, C166, and S375 each coordinate [4Fe-4S] cluster. Residues 142–364 form the Radical SAM core domain; sequence DEEEGTATAT…EEEAMAMGFL (223 aa).

The protein belongs to the radical SAM superfamily. Lipoyl synthase family. Requires [4Fe-4S] cluster as cofactor.

The protein resides in the mitochondrion. The catalysed reaction is [[Fe-S] cluster scaffold protein carrying a second [4Fe-4S](2+) cluster] + N(6)-octanoyl-L-lysyl-[protein] + 2 oxidized [2Fe-2S]-[ferredoxin] + 2 S-adenosyl-L-methionine + 4 H(+) = [[Fe-S] cluster scaffold protein] + N(6)-[(R)-dihydrolipoyl]-L-lysyl-[protein] + 4 Fe(3+) + 2 hydrogen sulfide + 2 5'-deoxyadenosine + 2 L-methionine + 2 reduced [2Fe-2S]-[ferredoxin]. It functions in the pathway protein modification; protein lipoylation via endogenous pathway; protein N(6)-(lipoyl)lysine from octanoyl-[acyl-carrier-protein]: step 2/2. In terms of biological role, catalyzes the radical-mediated insertion of two sulfur atoms into the C-6 and C-8 positions of the octanoyl moiety bound to the lipoyl domains of lipoate-dependent enzymes, thereby converting the octanoylated domains into lipoylated derivatives. The chain is Lipoyl synthase 2, mitochondrial from Trypanosoma cruzi (strain CL Brener).